The sequence spans 317 residues: Acetyl-coenzyme A carboxylase carboxyl transferase subunit alpha (317 aa).

The CoA carboxyltransferase C-terminal domain maps to Leu40–Ser293.

This sequence belongs to the AccA family. Acetyl-CoA carboxylase is a heterohexamer composed of biotin carboxyl carrier protein (AccB), biotin carboxylase (AccC) and two subunits each of ACCase subunit alpha (AccA) and ACCase subunit beta (AccD).

Its subcellular location is the cytoplasm. The enzyme catalyses N(6)-carboxybiotinyl-L-lysyl-[protein] + acetyl-CoA = N(6)-biotinyl-L-lysyl-[protein] + malonyl-CoA. It functions in the pathway lipid metabolism; malonyl-CoA biosynthesis; malonyl-CoA from acetyl-CoA: step 1/1. Functionally, component of the acetyl coenzyme A carboxylase (ACC) complex. First, biotin carboxylase catalyzes the carboxylation of biotin on its carrier protein (BCCP) and then the CO(2) group is transferred by the carboxyltransferase to acetyl-CoA to form malonyl-CoA. The polypeptide is Acetyl-coenzyme A carboxylase carboxyl transferase subunit alpha (Brucella abortus (strain S19)).